Here is a 102-residue protein sequence, read N- to C-terminus: Small ribosomal subunit protein uS10 (102 aa).

This sequence belongs to the universal ribosomal protein uS10 family. As to quaternary structure, part of the 30S ribosomal subunit.

Involved in the binding of tRNA to the ribosomes. The protein is Small ribosomal subunit protein uS10 of Sulfurihydrogenibium sp. (strain YO3AOP1).